The sequence spans 626 residues: Trehalase (626 aa).

2 helical membrane passes run 20–40 (KLFL…FIYL) and 45–65 (SLFF…MLDS). Residues Arg-224, Asp-232, Asn-268, Arg-277, Gln-279, Arg-344, and Glu-346 each coordinate alpha,alpha-trehalose. Residues Asp-380 and Glu-580 each act as proton donor/acceptor in the active site. Positions 580 and 595 each coordinate alpha,alpha-trehalose.

The protein belongs to the glycosyl hydrolase 37 family. Forms homodimers. Highly expressed in flowers. Expressed at low levels in leaves and stems. Expressed in guard cells.

The protein localises to the cell membrane. The protein resides in the cytoplasm. It is found in the nucleus. It carries out the reaction alpha,alpha-trehalose + H2O = alpha-D-glucose + beta-D-glucose. Its function is as follows. Involved in the regulation of trehalose content by hydrolyzing trehalose to glucose. May play a role in the regulation of abscisic acid-induced stomatal closure in response to drought stress. This chain is Trehalase (TRE1), found in Arabidopsis thaliana (Mouse-ear cress).